Consider the following 160-residue polypeptide: Large ribosomal subunit protein uL22c (160 aa).

It belongs to the universal ribosomal protein uL22 family. Part of the 50S ribosomal subunit.

Its subcellular location is the plastid. The protein localises to the chloroplast. This protein binds specifically to 23S rRNA. Functionally, the globular domain of the protein is located near the polypeptide exit tunnel on the outside of the subunit, while an extended beta-hairpin is found that lines the wall of the exit tunnel in the center of the 70S ribosome. This Aethionema grandiflorum (Persian stone-cress) protein is Large ribosomal subunit protein uL22c (rpl22).